A 375-amino-acid chain; its full sequence is Acetylornithine aminotransferase (375 aa).

Residues 93–94 (GT) and Phe-120 contribute to the pyridoxal 5'-phosphate site. Residue Arg-123 coordinates N(2)-acetyl-L-ornithine. A pyridoxal 5'-phosphate-binding site is contributed by 205–208 (DEVQ). N6-(pyridoxal phosphate)lysine is present on Lys-234. Thr-262 lines the N(2)-acetyl-L-ornithine pocket. Thr-263 contributes to the pyridoxal 5'-phosphate binding site.

The protein belongs to the class-III pyridoxal-phosphate-dependent aminotransferase family. ArgD subfamily. In terms of assembly, homodimer. The cofactor is pyridoxal 5'-phosphate.

It is found in the cytoplasm. It catalyses the reaction N(2)-acetyl-L-ornithine + 2-oxoglutarate = N-acetyl-L-glutamate 5-semialdehyde + L-glutamate. It participates in amino-acid biosynthesis; L-arginine biosynthesis; N(2)-acetyl-L-ornithine from L-glutamate: step 4/4. This Staphylococcus epidermidis (strain ATCC 35984 / DSM 28319 / BCRC 17069 / CCUG 31568 / BM 3577 / RP62A) protein is Acetylornithine aminotransferase.